Consider the following 448-residue polypeptide: Probable protein phosphatase 2C 74 (448 aa).

The tract at residues 1-48 is disordered; it reads MGSCLSSSGGGGSRRSLHGSPHVPGPGRRKRPPKRRPGSCSSSFDNTE. Gly2 carries the N-myristoyl glycine lipid modification. Basic residues predominate over residues 27–37; sequence GRRKRPPKRRP. The PPM-type phosphatase domain maps to 67–384; sequence TVSLFSQQGK…DDCAVVCLFL (318 aa). Mn(2+) is bound by residues Asp103, Gly104, Asp329, and Asp375. A disordered region spans residues 401 to 431; the sequence is HINNGVTEPEPDTASSSTPDSGTGSPELNGV. The span at 412–426 shows a compositional bias: low complexity; the sequence is DTASSSTPDSGTGSP.

Belongs to the PP2C family. Interacts with KIN10. Mg(2+) is required as a cofactor. The cofactor is Mn(2+). In terms of tissue distribution, expressed in the whole plant.

The protein localises to the cell membrane. The enzyme catalyses O-phospho-L-seryl-[protein] + H2O = L-seryl-[protein] + phosphate. The catalysed reaction is O-phospho-L-threonyl-[protein] + H2O = L-threonyl-[protein] + phosphate. Functionally, acts as a protein phosphatase. This Arabidopsis thaliana (Mouse-ear cress) protein is Probable protein phosphatase 2C 74.